We begin with the raw amino-acid sequence, 619 residues long: Chaperone protein HscA homolog (619 aa).

Belongs to the heat shock protein 70 family.

Its function is as follows. Chaperone involved in the maturation of iron-sulfur cluster-containing proteins. Has a low intrinsic ATPase activity which is markedly stimulated by HscB. In Pseudomonas paraeruginosa (strain DSM 24068 / PA7) (Pseudomonas aeruginosa (strain PA7)), this protein is Chaperone protein HscA homolog.